Here is a 415-residue protein sequence, read N- to C-terminus: CCA-adding enzyme (415 aa).

ATP contacts are provided by S52 and R55. CTP is bound by residues S52 and R55. Positions 64, 66, and 116 each coordinate Mg(2+). 3 residues coordinate ATP: H139, K159, and Y168. The CTP site is built by H139, K159, and Y168.

The protein belongs to the tRNA nucleotidyltransferase/poly(A) polymerase family. Archaeal CCA-adding enzyme subfamily. In terms of assembly, homodimer. Mg(2+) is required as a cofactor.

The enzyme catalyses a tRNA precursor + 2 CTP + ATP = a tRNA with a 3' CCA end + 3 diphosphate. It catalyses the reaction a tRNA with a 3' CCA end + 2 CTP + ATP = a tRNA with a 3' CCACCA end + 3 diphosphate. Its function is as follows. Catalyzes the addition and repair of the essential 3'-terminal CCA sequence in tRNAs without using a nucleic acid template. Adds these three nucleotides in the order of C, C, and A to the tRNA nucleotide-73, using CTP and ATP as substrates and producing inorganic pyrophosphate. tRNA 3'-terminal CCA addition is required both for tRNA processing and repair. Also involved in tRNA surveillance by mediating tandem CCA addition to generate a CCACCA at the 3' terminus of unstable tRNAs. While stable tRNAs receive only 3'-terminal CCA, unstable tRNAs are marked with CCACCA and rapidly degraded. This is CCA-adding enzyme from Pyrobaculum neutrophilum (strain DSM 2338 / JCM 9278 / NBRC 100436 / V24Sta) (Thermoproteus neutrophilus).